Reading from the N-terminus, the 458-residue chain is MILMPMASVVAVAEPKWVSVWGRFLWMALLSMALGSLLALLLPLGVVEEHCLAVLRGFHLLRSKLDRAQPVVPKCTSLCTELSVSSRDAGLLTVKTTASPAGKLEAKAALNQALEMKRQGKRGKAHKLFLHALKMDPGFVDALNEFGIFSEEDKDIIQADYLYTRALTISPFHEKALVNRDRTLPLVEEIDQRYFSVIDSKVKKVMSIPKGSSALRRVMEETYYHHIYHTVAIEGNTLTLSEIRHILETRYAVPGKSLEEQNEVIGMHAAMKYINTTLVSRIGSVTMDDMLEIHRRVLGYVDPVEAGRFRRTQVLVGHHIPPHPRDVEKQMQEFTQWLNSEDAMNLHPVEFAALAHYKLVYIHPFIDGNGRTSRLLMNLILMQAGYPPITIRKEQRSEYYHVLEVANEGDVRPFIRFIAKCTEVTLDTLLLATTEYSVALPEAQPNHSGFKETLPVRP.

At 1-23 the chain is on the cytoplasmic side; it reads MILMPMASVVAVAEPKWVSVWGR. Residues 24-44 traverse the membrane as a helical; Signal-anchor for type II membrane protein segment; sequence FLWMALLSMALGSLLALLLPL. Over 45-458 the chain is Lumenal; it reads GVVEEHCLAV…GFKETLPVRP (414 aa). Thr80 carries the post-translational modification O-AMP-threonine; by autocatalysis. TPR repeat units follow at residues 106-139 and 140-173; these read AKAA…DPGF and VDAL…SPFH. An O-AMP-threonine; by autocatalysis modification is found at Thr183. The Inhibitory (S/T)XXXE(G/N) motif motif lies at 230-235; sequence TVAIEG. ATP is bound at residue Glu234. Asn275 is a glycosylation site (N-linked (GlcNAc...) asparagine). The region spanning 285–420 is the Fido domain; sequence VTMDDMLEIH…VRPFIRFIAK (136 aa). Residue 316–319 participates in ATP binding; it reads VGHH. Residue His363 is part of the active site. Residues 367-374, 399-400, and Asn407 contribute to the ATP site; these read DGNGRTSR and YY.

This sequence belongs to the fic family. As to quaternary structure, homodimer. Interacts with HD. Mg(2+) serves as cofactor. Mn(2+) is required as a cofactor. In terms of processing, auto-AMPylated in vitro.

The protein resides in the endoplasmic reticulum membrane. The catalysed reaction is L-tyrosyl-[protein] + ATP = O-(5'-adenylyl)-L-tyrosyl-[protein] + diphosphate. The enzyme catalyses 3-O-(5'-adenylyl)-L-threonyl-[protein] + H2O = L-threonyl-[protein] + AMP + H(+). It catalyses the reaction L-threonyl-[protein] + ATP = 3-O-(5'-adenylyl)-L-threonyl-[protein] + diphosphate. With respect to regulation, the side chain of Glu-234 determines which of the two opposing activities (AMPylase or de-AMPylase) will take place. In response to endoplasmic reticulum stress, mediates de-AMPylase activity. Adenylyltransferase activity is inhibited by the inhibitory helix present at the N-terminus: Glu-234 binds ATP and competes with ATP-binding at Arg-374, thereby preventing adenylyltransferase activity. In unstressed cells, disengagement of Glu-234 promotes adenylyltransferase activity. Activation dissociates ATP-binding from Glu-234, allowing ordered binding of the entire ATP moiety with the alpha-phosphate in an orientation that is productive for accepting an incoming target hydroxyl side chain. Its function is as follows. Protein that can both mediate the addition of adenosine 5'-monophosphate (AMP) to specific residues of target proteins (AMPylation), and the removal of the same modification from target proteins (de-AMPylation), depending on the context. The side chain of Glu-231 determines which of the two opposing activities (AMPylase or de-AMPylase) will take place. Acts as a key regulator of the ERN1/IRE1-mediated unfolded protein response (UPR) by mediating AMPylation or de-AMPylation of HSPA5/BiP. In unstressed cells, acts as an adenylyltransferase by mediating AMPylation of HSPA5/BiP at 'Thr-518', thereby inactivating it. In response to endoplasmic reticulum stress, acts as a phosphodiesterase by mediating removal of ATP (de-AMPylation) from HSPA5/BiP at 'Thr-518', leading to restore HSPA5/BiP activity. Although it is able to AMPylate RhoA, Rac and Cdc42 Rho GTPases in vitro, Rho GTPases do not constitute physiological substrates. The chain is Protein adenylyltransferase FICD from Mus musculus (Mouse).